Here is a 302-residue protein sequence, read N- to C-terminus: uncharacterized protein (302 aa).

The next 9 membrane-spanning stretches (helical) occupy residues 10 to 30 (VLSV…GVLG), 65 to 85 (LVLI…IAYL), 102 to 122 (VAAA…GIFG), 130 to 150 (IFYD…LSHI), 162 to 182 (AVFF…LWGL), 190 to 210 (ILGY…GLTL), 224 to 244 (LVSG…SYVL), 251 to 271 (FSVT…VLAI), and 282 to 302 (SCIF…SVVL).

Belongs to the auxin efflux carrier (TC 2.A.69) family.

The protein localises to the cell membrane. This is an uncharacterized protein from Methanothermobacter thermautotrophicus (strain ATCC 29096 / DSM 1053 / JCM 10044 / NBRC 100330 / Delta H) (Methanobacterium thermoautotrophicum).